We begin with the raw amino-acid sequence, 211 residues long: External core antigen (211 aa).

An N-terminal signal peptide occupies residues 1 to 19; sequence MHLFHLCLIILCSCPTVQA. The segment at 25–27 is HBEAG; it reads GWL. The segment at 165–211 is disordered; the sequence is NAPILSTLPETTVVRRRRPSGRRTPSPRRRRSQSPRRRRSQSPASSC. Positions 178–204 are enriched in basic residues; it reads VRRRRPSGRRTPSPRRRRSQSPRRRRS. Residues 183 to 189 form a 1; half-length repeat; that stretch reads PSGRRTP. The 3 X 8 AA repeats of S-P-R-R-R-R-S-Q stretch occupies residues 183 to 205; that stretch reads PSGRRTPSPRRRRSQSPRRRRSQ. Residues 183-211 constitute a propeptide that is removed on maturation; the sequence is PSGRRTPSPRRRRSQSPRRRRSQSPASSC. A run of 2 repeats spans residues 190-197 and 198-205.

The protein belongs to the orthohepadnavirus precore antigen family. Homodimerizes. Post-translationally, phosphorylated. In terms of processing, cleaved by host furin.

The protein resides in the secreted. It localises to the host nucleus. May regulate immune response to the intracellular capsid in acting as a T-cell tolerogen, by having an immunoregulatory effect which prevents destruction of infected cells by cytotoxic T-cells. This immune regulation may predispose to chronicity during perinatal infections and prevent severe liver injury during adult infections. This chain is External core antigen, found in Woolly monkey hepatitis B virus (isolate Louisville) (WMHBV).